The following is a 427-amino-acid chain: Enolase (427 aa).

Q163 is a binding site for (2R)-2-phosphoglycerate. The active-site Proton donor is E205. The Mg(2+) site is built by D242, E285, and D312. (2R)-2-phosphoglycerate is bound by residues K337, R366, S367, and K388. The active-site Proton acceptor is K337.

It belongs to the enolase family. It depends on Mg(2+) as a cofactor.

Its subcellular location is the cytoplasm. It is found in the secreted. It localises to the cell surface. The enzyme catalyses (2R)-2-phosphoglycerate = phosphoenolpyruvate + H2O. The protein operates within carbohydrate degradation; glycolysis; pyruvate from D-glyceraldehyde 3-phosphate: step 4/5. In terms of biological role, catalyzes the reversible conversion of 2-phosphoglycerate (2-PG) into phosphoenolpyruvate (PEP). It is essential for the degradation of carbohydrates via glycolysis. This is Enolase from Methylocella silvestris (strain DSM 15510 / CIP 108128 / LMG 27833 / NCIMB 13906 / BL2).